We begin with the raw amino-acid sequence, 510 residues long: 2,3-bisphosphoglycerate-independent phosphoglycerate mutase (510 aa).

Mn(2+)-binding residues include Asp-13 and Ser-63. Ser-63 acts as the Phosphoserine intermediate in catalysis. Substrate-binding positions include His-124, 154–155, Arg-186, Arg-192, 262–265, and Lys-334; these read RD and RADR. Mn(2+) is bound by residues Asp-401, His-405, Asp-442, His-443, and His-461.

Belongs to the BPG-independent phosphoglycerate mutase family. Monomer. The cofactor is Mn(2+).

It catalyses the reaction (2R)-2-phosphoglycerate = (2R)-3-phosphoglycerate. It functions in the pathway carbohydrate degradation; glycolysis; pyruvate from D-glyceraldehyde 3-phosphate: step 3/5. Functionally, catalyzes the interconversion of 2-phosphoglycerate and 3-phosphoglycerate. The chain is 2,3-bisphosphoglycerate-independent phosphoglycerate mutase from Aliivibrio fischeri (strain MJ11) (Vibrio fischeri).